The sequence spans 225 residues: PKHD-type hydroxylase YbiX (225 aa).

The region spanning 78 to 177 (TLSTPLFNRY…RVASFMWIQS (100 aa)) is the Fe2OG dioxygenase domain. Residues H96, D98, and H158 each contribute to the Fe cation site. R168 serves as a coordination point for 2-oxoglutarate.

Fe(2+) serves as cofactor. It depends on L-ascorbate as a cofactor.

The sequence is that of PKHD-type hydroxylase YbiX from Shigella flexneri serotype 5b (strain 8401).